A 427-amino-acid chain; its full sequence is Caspase recruitment domain-containing protein 8 (427 aa).

The tract at residues 1–23 is disordered; the sequence is MGIPTSSVSEEQESSEGQDSGDI. A ZU5 region spans residues 51–186; the sequence is FLGPEGNVDV…FYAVLEKPSF (136 aa). In terms of domain architecture, FIIND spans 51 to 336; sequence FLGPEGNVDV…IQLGAASAPP (286 aa). A UPA region spans residues 187 to 336; that stretch reads SLMGILLRIA…IQLGAASAPP (150 aa). In terms of domain architecture, CARD spans 336 to 426; the sequence is PAFSGAAFVK…YLVSYLRQQS (91 aa).

Interacts with DPP9; leading to inhibit activation of the inflammasome. DPP9 acts via formation of a ternary complex, composed of a DPP9 homodimer, one full-length CARD8 protein, and one cleaved C-terminus of CARD8 (Caspase recruitment domain-containing protein 8, C-terminus). Interacts with DPP8; leading to inhibit activation of the inflammasome, probably via formation of a ternary complex with DPP8. Interacts with NLRP3. Interacts with IKBKG/NEMO. Interacts with DRAL. Binds to caspase-1 (CASP1), CARD16/pseudo-ICE and CARD18/ICEBERG. Interacts with NLRP2 (via NACHT domain). In terms of assembly, interacts with the C-terminal part of CARD8 (Caspase recruitment domain-containing protein 8, C-terminus) in absence of pathogens and other damage-associated signals. As to quaternary structure, interacts with the N-terminal part of CARD8 (Caspase recruitment domain-containing protein 8, N-terminus) in absence of pathogens and other damage-associated signals. Homomultimer; forms the CARD8 inflammasome polymeric complex, a filament composed of homopolymers of this form in response to pathogens and other damage-associated signals. The CARD8 inflammasome polymeric complex directly recruits pro-caspase-1 (proCASP1) independently of PYCARD/ASC. Interacts (via CARD domain) with CASP1 (via CARD domain); leading to CASP1 activation. Undergoes autocatalytic processing within the FIIND domain to generate the N-terminal and C-terminal parts, which are associated non-covalently in absence of pathogens and other damage-associated signals. In terms of processing, ubiquitinated by the N-end rule pathway in response to pathogens and other damage-associated signals, leading to its degradation by the proteasome and subsequent release of the cleaved C-terminal part of the protein (Caspase recruitment domain-containing protein 8, C-terminus), which polymerizes and forms the CARD8 inflammasome.

Its subcellular location is the cytoplasm. The protein localises to the nucleus. It is found in the inflammasome. With respect to regulation, CARD8 inflammasome is inhibited by DPP8 and DPP9, which sequester the C-terminal fragment of CARD8 (Caspase recruitment domain-containing protein 8, C-terminus) in a ternary complex, thereby preventing CARD8 oligomerization and activation. CARD8 inflammasome is activated by Val-boroPro (Talabostat, PT-100), an inhibitor of dipeptidyl peptidases DPP8 and DPP9. Val-boroPro relieves inhibition of DPP8 and/or DPP9 by inducing the proteasome-mediated destruction of the N-terminal part of CARD8, releasing its C-terminal part from autoinhibition. Functionally, inflammasome sensor, which mediates inflammasome activation in response to various pathogen-associated signals, leading to subsequent pyroptosis of CD4(+) T-cells and macrophages. Inflammasomes are supramolecular complexes that assemble in the cytosol in response to pathogens and other damage-associated signals and play critical roles in innate immunity and inflammation. Acts as a recognition receptor (PRR): recognizes specific pathogens and other damage-associated signals, such as Val-boroPro inhibitor, and mediates CARD8 inflammasome activation. In response to pathogen-associated signals, the N-terminal part of CARD8 is degraded by the proteasome, releasing the cleaved C-terminal part of the protein (Caspase recruitment domain-containing protein 8, C-terminus), which polymerizes to initiate the formation of the inflammasome complex: the CARD8 inflammasome directly recruits pro-caspase-1 (proCASP1) independently of PYCARD/ASC and promotes caspase-1 (CASP1) activation, which subsequently cleaves and activates inflammatory cytokines IL1B and IL18 and gasdermin-D (GSDMD), leading to pyroptosis. Also acts as a negative regulator of the NLRP3 inflammasome. May also act as an inhibitor of NF-kappa-B activation. Its function is as follows. Constitutes the precursor of the CARD8 inflammasome, which mediates autoproteolytic processing within the FIIND domain to generate the N-terminal and C-terminal parts, which are associated non-covalently in absence of pathogens and other damage-associated signals. In terms of biological role, regulatory part that prevents formation of the CARD8 inflammasome: in absence of pathogens and other damage-associated signals, interacts with the C-terminal part of CARD8 (Caspase recruitment domain-containing protein 8, C-terminus), preventing activation of the CARD8 inflammasome. In response to pathogen-associated signals, this part is ubiquitinated by the N-end rule pathway and degraded by the proteasome, releasing the cleaved C-terminal part of the protein, which polymerizes and forms the CARD8 inflammasome. Constitutes the active part of the CARD8 inflammasome. In absence of pathogens and other damage-associated signals, interacts with the N-terminal part of CARD8 (Caspase recruitment domain-containing protein 8, N-terminus), preventing activation of the CARD8 inflammasome. In response to pathogen-associated signals, the N-terminal part of CARD8 is degraded by the proteasome, releasing this form, which polymerizes to form the CARD8 inflammasome complex: the CARD8 inflammasome complex then directly recruits pro-caspase-1 (proCASP1) and promotes caspase-1 (CASP1) activation, leading to gasdermin-D (GSDMD) cleavage and subsequent pyroptosis. The protein is Caspase recruitment domain-containing protein 8 of Pongo abelii (Sumatran orangutan).